We begin with the raw amino-acid sequence, 295 residues long: MSWLSKLMPSGIRTENTPAKKRSVPEGLWEKCSNCGSALYGPELEENLEVCPKCDHHMAIRARARLNSLFDPDTATTEIAAQLGPVDVLKFKDQKRYGERIKASQKASGEYDALIAMRGTLKGNPLVAAAFDFAFMGGSMGSVVGERFARAAEVALEVGCPFVCFSASGGARMQEGLFSLMQMAKTSAALGRLREAGLPYISVLTHPTTGGVSASFAMLGDINIAEPHALIGFAGPRVIEQTVRETLPEGFQRSEFLLDHGAIDQICDRREMRNRIAELTAMMMRQPHPQDADAA.

The segment at 1-20 is disordered; that stretch reads MSWLSKLMPSGIRTENTPAK. The region spanning 28–295 is the CoA carboxyltransferase N-terminal domain; that stretch reads LWEKCSNCGS…QPHPQDADAA (268 aa). Cysteine 32, cysteine 35, cysteine 51, and cysteine 54 together coordinate Zn(2+). The C4-type zinc finger occupies 32–54; that stretch reads CSNCGSALYGPELEENLEVCPKC.

Belongs to the AccD/PCCB family. As to quaternary structure, acetyl-CoA carboxylase is a heterohexamer composed of biotin carboxyl carrier protein (AccB), biotin carboxylase (AccC) and two subunits each of ACCase subunit alpha (AccA) and ACCase subunit beta (AccD). Requires Zn(2+) as cofactor.

Its subcellular location is the cytoplasm. It carries out the reaction N(6)-carboxybiotinyl-L-lysyl-[protein] + acetyl-CoA = N(6)-biotinyl-L-lysyl-[protein] + malonyl-CoA. It participates in lipid metabolism; malonyl-CoA biosynthesis; malonyl-CoA from acetyl-CoA: step 1/1. Component of the acetyl coenzyme A carboxylase (ACC) complex. Biotin carboxylase (BC) catalyzes the carboxylation of biotin on its carrier protein (BCCP) and then the CO(2) group is transferred by the transcarboxylase to acetyl-CoA to form malonyl-CoA. The sequence is that of Acetyl-coenzyme A carboxylase carboxyl transferase subunit beta from Xanthomonas oryzae pv. oryzae (strain MAFF 311018).